We begin with the raw amino-acid sequence, 543 residues long: Excitatory amino acid transporter 1 (543 aa).

The Cytoplasmic portion of the chain corresponds to 1–47 (MTKSNGEEPRMGGRMERLQQGVRKRTLLAKKKVQSLTKEDVKSYLFR). A helical transmembrane segment spans residues 48–68 (NAFVLLTVTAVIVGTILGFAL). The Extracellular segment spans residues 69-86 (RPYKMSYREVKYFSFPGE). The helical transmembrane segment at 87-108 (LLMRMLQMLVLPLIISSLVTGM) threads the bilayer. Residues 109 to 122 (AALDSKASGKMGMR) are Cytoplasmic-facing. The helical transmembrane segment at 123–145 (AVVYYMTTTIIAVVIGIIIVIII) threads the bilayer. At 146-236 (HPGKGTKENM…IREEMVPVPG (91 aa)) the chain is on the extracellular side. Asn-206 and Asn-216 each carry an N-linked (GlcNAc...) asparagine glycan. Residues 237-260 (SVNGVNALGLVVFSMCFGFVIGNM) traverse the membrane as a helical segment. Residues 261-269 (KEQGQALRE) are Cytoplasmic-facing. The helical transmembrane segment at 270 to 297 (FFDSLNEAIMRLVAVIMWYAPLGILFLI) threads the bilayer. The Extracellular segment spans residues 298–318 (AGKIVEMEDMGVIGGQLAMYT). Residues 319 to 340 (VTVIVGLLIHAVIVLPLLYFLV) traverse the membrane as a helical segment. The Cytoplasmic segment spans residues 341-345 (TRKNP). Positions 346-376 (WVFIGGLLQALITALGTSSSSATLPITFKCL) form an intramembrane region, discontinuously helical. 363–365 (SSS) is a binding site for L-aspartate. The Cytoplasmic segment spans residues 377-385 (EENNGVDKR). Residues 386–412 (ITRFVLPVGATINMDGTALYEALAAIF) traverse the membrane as a helical segment. Na(+)-binding residues include Gly-394, Thr-396, and Asn-398. Thr-402 is an L-aspartate binding site. Residues 413–425 (IAQVNNFDLNFGQ) are Extracellular-facing. An intramembrane region (discontinuously helical) is located at residues 426 to 459 (IITISITATAASIGAAGIPQAGLVTMVIVLTSVG). An L-aspartate-binding site is contributed by 443–447 (IPQAG). The Extracellular portion of the chain corresponds to 460–472 (LPTDDITLIIAVD). The chain crosses the membrane as a helical span at residues 473-494 (WFLDRLRTTTNVLGDSLGAGIV). L-aspartate is bound by residues Asp-476 and Asn-483. Residues Asn-483 and Asp-487 each contribute to the Na(+) site. At 495–543 (EHLSRHELKNRDVEMGNSVIEENEMKKPYQLIAQDNEPEKPVADSETKM) the chain is on the cytoplasmic side. The residue at position 512 (Ser-512) is a Phosphoserine. A disordered region spans residues 522 to 543 (PYQLIAQDNEPEKPVADSETKM). Positions 531–543 (EPEKPVADSETKM) are enriched in basic and acidic residues.

The protein belongs to the dicarboxylate/amino acid:cation symporter (DAACS) (TC 2.A.23) family. SLC1A3 subfamily. Homotrimer. Post-translationally, glycosylated. In terms of tissue distribution, detected in brain, in Bergmann glia arborising into the molecular layer of the cerebellum (at protein level). Localized in brain and is highly enriched in the Purkinje cell layer in cerebellum. Intermediate level in lung, low level in spleen, skeletal muscle and testis.

The protein resides in the cell membrane. It carries out the reaction K(+)(in) + L-glutamate(out) + 3 Na(+)(out) + H(+)(out) = K(+)(out) + L-glutamate(in) + 3 Na(+)(in) + H(+)(in). The enzyme catalyses K(+)(in) + L-aspartate(out) + 3 Na(+)(out) + H(+)(out) = K(+)(out) + L-aspartate(in) + 3 Na(+)(in) + H(+)(in). The catalysed reaction is D-aspartate(out) + K(+)(in) + 3 Na(+)(out) + H(+)(out) = D-aspartate(in) + K(+)(out) + 3 Na(+)(in) + H(+)(in). In terms of biological role, sodium-dependent, high-affinity amino acid transporter that mediates the uptake of L-glutamate and also L-aspartate and D-aspartate. Functions as a symporter that transports one amino acid molecule together with two or three Na(+) ions and one proton, in parallel with the counter-transport of one K(+) ion. Plays a redundant role in the rapid removal of released glutamate from the synaptic cleft, which is essential for terminating the postsynaptic action of glutamate. The sequence is that of Excitatory amino acid transporter 1 (Slc1a3) from Mus musculus (Mouse).